The primary structure comprises 251 residues: MASNENLPPNVIKQLAKELKSLDESPPDGIKVVVNDEDFSQICADIEGPVGTPYENGLFRMKLALSHDFPHSPPKGYFMTKIFHPNVASNGEICVNTLKKDWNPSLGLRHVLSVVRCLLIEPFPESALNEQAGKMLLENYDEYARHARLYTGIHAKPKPKFKTGAISESTTALNVGQTNNETPGAATAIPSSMTDIKRVTTSAQDQQHVANVVVAASASVVTTTQKREAGLAKVQADKKKVDARKKSLKRL.

Residues 10–156 (NVIKQLAKEL…ARLYTGIHAK (147 aa)) enclose the UBC core domain. The Glycyl thioester intermediate role is filled by C94. The span at 230 to 240 (GLAKVQADKKK) shows a compositional bias: basic and acidic residues. A disordered region spans residues 230–251 (GLAKVQADKKKVDARKKSLKRL). The stretch at 230 to 251 (GLAKVQADKKKVDARKKSLKRL) forms a coiled coil. Residues 241-251 (VDARKKSLKRL) show a composition bias toward basic residues.

The protein belongs to the ubiquitin-conjugating enzyme family. Post-translationally, self-ubiquitinated. In terms of tissue distribution, expressed in seeds, pistils, siliques, hypocotyls and leaves.

The enzyme catalyses S-ubiquitinyl-[E1 ubiquitin-activating enzyme]-L-cysteine + [E2 ubiquitin-conjugating enzyme]-L-cysteine = [E1 ubiquitin-activating enzyme]-L-cysteine + S-ubiquitinyl-[E2 ubiquitin-conjugating enzyme]-L-cysteine.. It participates in protein modification; protein ubiquitination. Accepts the ubiquitin from the E1 complex and catalyzes its covalent attachment to other proteins. This is Ubiquitin-conjugating enzyme E2 22 (UBC22) from Arabidopsis thaliana (Mouse-ear cress).